The chain runs to 426 residues: D-tagatose-1,6-bisphosphate aldolase subunit KbaZ (426 aa).

It belongs to the GatZ/KbaZ family. KbaZ subfamily. In terms of assembly, forms a complex with KbaY.

The protein operates within carbohydrate metabolism; D-tagatose 6-phosphate degradation; D-glyceraldehyde 3-phosphate and glycerone phosphate from D-tagatose 6-phosphate: step 2/2. Component of the tagatose-1,6-bisphosphate aldolase KbaYZ that is required for full activity and stability of the Y subunit. Could have a chaperone-like function for the proper and stable folding of KbaY. When expressed alone, KbaZ does not show any aldolase activity. This is D-tagatose-1,6-bisphosphate aldolase subunit KbaZ from Escherichia coli O7:K1 (strain IAI39 / ExPEC).